The chain runs to 397 residues: Phosphopentomutase (397 aa).

6 residues coordinate Mn(2+): Asp-12, Asp-289, His-294, Asp-330, His-331, and His-342.

It belongs to the phosphopentomutase family. It depends on Mn(2+) as a cofactor.

The protein resides in the cytoplasm. It carries out the reaction 2-deoxy-alpha-D-ribose 1-phosphate = 2-deoxy-D-ribose 5-phosphate. The catalysed reaction is alpha-D-ribose 1-phosphate = D-ribose 5-phosphate. The protein operates within carbohydrate degradation; 2-deoxy-D-ribose 1-phosphate degradation; D-glyceraldehyde 3-phosphate and acetaldehyde from 2-deoxy-alpha-D-ribose 1-phosphate: step 1/2. In terms of biological role, isomerase that catalyzes the conversion of deoxy-ribose 1-phosphate (dRib-1-P) and ribose 1-phosphate (Rib-1-P) to deoxy-ribose 5-phosphate (dRib-5-P) and ribose 5-phosphate (Rib-5-P), respectively. The protein is Phosphopentomutase of Limosilactobacillus reuteri (strain DSM 20016) (Lactobacillus reuteri).